A 338-amino-acid chain; its full sequence is Phenylalanine--tRNA ligase alpha subunit (338 aa).

Glutamate 253 contacts Mg(2+).

It belongs to the class-II aminoacyl-tRNA synthetase family. Phe-tRNA synthetase alpha subunit type 1 subfamily. Tetramer of two alpha and two beta subunits. Requires Mg(2+) as cofactor.

It localises to the cytoplasm. It carries out the reaction tRNA(Phe) + L-phenylalanine + ATP = L-phenylalanyl-tRNA(Phe) + AMP + diphosphate + H(+). The chain is Phenylalanine--tRNA ligase alpha subunit from Pelobacter propionicus (strain DSM 2379 / NBRC 103807 / OttBd1).